Consider the following 293-residue polypeptide: Methylsterol monooxygenase 1 (293 aa).

2 helical membrane passes run 55-75 (LIVH…FQFI) and 100-120 (VLLF…YYFT). Residues 145–274 (CAVIEDTWHY…FTWWDRIFGT (130 aa)) enclose the Fatty acid hydroxylase domain. Positions 157–161 (HRLLH) match the Histidine box-1 motif. The short motif at 170–174 (HKIHH) is the Histidine box-2 element. Residues 199 to 219 (FFIGIMLLCDHVILLWAWVTV) traverse the membrane as a helical segment. A Histidine box-3 motif is present at residues 249-255 (HHDFHHM).

Belongs to the sterol desaturase family. Fe cation is required as a cofactor. Ubiquitinated by MARCHF6, leading to proteasomal degradation.

The protein resides in the endoplasmic reticulum membrane. It catalyses the reaction 4,4-dimethyl-5alpha-cholest-7-en-3beta-ol + 6 Fe(II)-[cytochrome b5] + 3 O2 + 5 H(+) = 4alpha-carboxy-4beta-methyl-5alpha-cholest-7-ene-3beta-ol + 6 Fe(III)-[cytochrome b5] + 4 H2O. The catalysed reaction is 4,4-dimethyl-5alpha-cholesta-8,24-dien-3beta-ol + 6 Fe(II)-[cytochrome b5] + 3 O2 + 5 H(+) = 4beta-methylzymosterol-4alpha-carboxylate + 6 Fe(III)-[cytochrome b5] + 4 H2O. It carries out the reaction 4alpha-methylzymosterol + 6 Fe(II)-[cytochrome b5] + 3 O2 + 5 H(+) = 4alpha-carboxyzymosterol + 6 Fe(III)-[cytochrome b5] + 4 H2O. The enzyme catalyses 4alpha-methyl-5alpha-cholest-7-en-3beta-ol + 6 Fe(II)-[cytochrome b5] + 3 O2 + 5 H(+) = 4alpha-carboxy-5alpha-cholest-7-en-3beta-ol + 6 Fe(III)-[cytochrome b5] + 4 H2O. It catalyses the reaction 4,4-dimethyl-5alpha-cholest-8-en-3beta-ol + 6 Fe(II)-[cytochrome b5] + 3 O2 + 5 H(+) = 4alpha-carboxy-4beta-methyl-5alpha-cholest-8-en-3beta-ol + 6 Fe(III)-[cytochrome b5] + 4 H2O. The catalysed reaction is 4alpha-methyl-5alpha-cholest-8-en-3beta-ol + 6 Fe(II)-[cytochrome b5] + 3 O2 + 5 H(+) = 4alpha-carboxy-5alpha-cholest-8-ene-3beta-ol + 6 Fe(III)-[cytochrome b5] + 4 H2O. It functions in the pathway steroid biosynthesis; zymosterol biosynthesis; zymosterol from lanosterol: step 3/6. The protein operates within steroid biosynthesis; cholesterol biosynthesis. In terms of biological role, catalyzes the three-step monooxygenation required for the demethylation of 4,4-dimethyl and 4alpha-methylsterols, which can be subsequently metabolized to cholesterol. The protein is Methylsterol monooxygenase 1 (MSMO1) of Sus scrofa (Pig).